Reading from the N-terminus, the 284-residue chain is 2-dehydro-3-deoxyphosphooctonate aldolase (284 aa).

Belongs to the KdsA family.

Its subcellular location is the cytoplasm. The enzyme catalyses D-arabinose 5-phosphate + phosphoenolpyruvate + H2O = 3-deoxy-alpha-D-manno-2-octulosonate-8-phosphate + phosphate. It participates in carbohydrate biosynthesis; 3-deoxy-D-manno-octulosonate biosynthesis; 3-deoxy-D-manno-octulosonate from D-ribulose 5-phosphate: step 2/3. It functions in the pathway bacterial outer membrane biogenesis; lipopolysaccharide biosynthesis. This Pectobacterium carotovorum subsp. carotovorum (strain PC1) protein is 2-dehydro-3-deoxyphosphooctonate aldolase.